The sequence spans 87 residues: Apolipoprotein C-I (87 aa).

The signal sequence occupies residues 1–26 (MRFILSLPVLAVVLAMVLEGPAPAQA).

It belongs to the apolipoprotein C1 family.

Its subcellular location is the secreted. Functionally, inhibitor of lipoprotein binding to the low density lipoprotein (LDL) receptor, LDL receptor-related protein, and very low density lipoprotein (VLDL) receptor. Associates with high density lipoproteins (HDL) and the triacylglycerol-rich lipoproteins in the plasma and makes up about 10% of the protein of the VLDL and 2% of that of HDL. Appears to interfere directly with fatty acid uptake and is also the major plasma inhibitor of cholesteryl ester transfer protein (CETP). Binds free fatty acids and reduces their intracellular esterification. Modulates the interaction of APOE with beta-migrating VLDL and inhibits binding of beta-VLDL to the LDL receptor-related protein. This is Apolipoprotein C-I (APOC1) from Pteropus alecto (Black flying fox).